A 362-amino-acid polypeptide reads, in one-letter code: tRNA/tmRNA (uracil-C(5))-methyltransferase (362 aa).

S-adenosyl-L-methionine is bound by residues Q186, Y214, N219, E235, and D295. Residue C320 is the Nucleophile of the active site. The active-site Proton acceptor is the E354.

This sequence belongs to the class I-like SAM-binding methyltransferase superfamily. RNA M5U methyltransferase family. TrmA subfamily.

It carries out the reaction uridine(54) in tRNA + S-adenosyl-L-methionine = 5-methyluridine(54) in tRNA + S-adenosyl-L-homocysteine + H(+). The catalysed reaction is uridine(341) in tmRNA + S-adenosyl-L-methionine = 5-methyluridine(341) in tmRNA + S-adenosyl-L-homocysteine + H(+). Its function is as follows. Dual-specificity methyltransferase that catalyzes the formation of 5-methyluridine at position 54 (m5U54) in all tRNAs, and that of position 341 (m5U341) in tmRNA (transfer-mRNA). This Ectopseudomonas mendocina (strain ymp) (Pseudomonas mendocina) protein is tRNA/tmRNA (uracil-C(5))-methyltransferase.